We begin with the raw amino-acid sequence, 293 residues long: DNA repair protein RecO (293 aa).

This sequence belongs to the RecO family.

Functionally, involved in DNA repair and RecF pathway recombination. In Acaryochloris marina (strain MBIC 11017), this protein is DNA repair protein RecO.